The sequence spans 509 residues: MASHSLNTLHTVFEYIWDRELPNDDFTNTLTVLGRTYAPGPPPHQEKAPDLRTLFHKFKPDQAADTEASWPREFLRDVHSRIWLTYRSGFPLIKRAEDGPSPLSFGSLIRGTVDLATVTKGFTTDAGWGCMIRTSQSLLANSLLQLRLGRGWRYDQTRECAKHAEIVSWFVDIPTAPFSIHNFVEQGANCAGKKPGEWFGPSAAARSIQVLCEANYDKTGLKVYFTASGDIYEDELFELAQQGAELRPVLILAGIRLGVKNVNPLYWDFLKKTLGWPQSVGIAGGRPSSSHYFFGFQGDYLFYLDPHVPQKALLIASEAPHESPDPNHYVEVESGLDLDSVHTNKIRKLHLDQMDPSMLVGLLVENRASYDALKHSINSHDQGSRFLNVYDSRPVLAAKSSGGLEESEFVDLGVLSMNEYDAIDDCDVGTCSALLRKERAFSHPVLVAMDPEEPEEIDASIHFDKDASILEKDPDRANETFEEIHVSETESRFEPDEPVVVSHDSAAVM.

Catalysis depends on C130, which acts as the Nucleophile. Residues D305 and H307 contribute to the active site.

Belongs to the peptidase C54 family.

Its subcellular location is the cytoplasm. The protein localises to the nucleus. It is found in the preautophagosomal structure. It catalyses the reaction [protein]-C-terminal L-amino acid-glycyl-phosphatidylethanolamide + H2O = [protein]-C-terminal L-amino acid-glycine + a 1,2-diacyl-sn-glycero-3-phosphoethanolamine. Functionally, cysteine protease that plays a key role in cytoplasm to vacuole transport (Cvt) and autophagy by mediating both proteolytic activation and delipidation of ATG8. Required for selective autophagic degradation of the nucleus (nucleophagy) as well as for mitophagy which contributes to regulate mitochondrial quantity and quality by eliminating the mitochondria to a basal level to fulfill cellular energy requirements and preventing excess ROS production. The protease activity is required for proteolytic activation of ATG8: cleaves the C-terminal amino acid of ATG8 to reveal a C-terminal glycine. ATG8 ubiquitin-like activity requires the exposure of the glycine at the C-terminus for its conjugation to phosphatidylethanolamine (PE) and its insertion to membranes, which is necessary for autophagy. The ATG8-PE conjugate mediates tethering between adjacent membranes and stimulates membrane hemifusion, leading to expansion of the autophagosomal membrane during autophagy. In addition to the protease activity, also catalyzes deconjugation of PE-conjugated forms of ATG8 during macroautophagy: ATG8 delipidation is required to release the protein from membranes, which facilitates multiple events during macroautophagy, and especially for efficient autophagosome biogenesis, the assembly of ATG9-containing tubulovesicular clusters into phagophores/autophagosomes, and for the disassembly of PAS-associated ATG components. ATG8 delipidation by ATG4 also recycles ATG8-PE generated on inappropriate membranes to maintain a reservoir of unlipidated ATG8 that is required for autophagosome formation at the PAS. This chain is Probable cysteine protease ATG4 (ATG4), found in Pichia angusta (Yeast).